The chain runs to 383 residues: Glucose-1-phosphate adenylyltransferase (383 aa).

Alpha-D-glucose 1-phosphate-binding positions include Tyr100, Gly165, 180–181, and Ser191; that span reads EK.

This sequence belongs to the bacterial/plant glucose-1-phosphate adenylyltransferase family. Homotetramer.

It carries out the reaction alpha-D-glucose 1-phosphate + ATP + H(+) = ADP-alpha-D-glucose + diphosphate. The protein operates within glycan biosynthesis; glycogen biosynthesis. In terms of biological role, involved in the biosynthesis of ADP-glucose, a building block required for the elongation reactions to produce glycogen. Catalyzes the reaction between ATP and alpha-D-glucose 1-phosphate (G1P) to produce pyrophosphate and ADP-Glc. This Clostridium kluyveri (strain ATCC 8527 / DSM 555 / NBRC 12016 / NCIMB 10680 / K1) protein is Glucose-1-phosphate adenylyltransferase.